The primary structure comprises 270 residues: MNLAFRFSYFGDRFFGSQMQPDLCTVEGEFIGACRLLRLFDDWREANFATAGRTDRGVHARSQVCSFLTDKPERAIEALNRVLPADIWCTGWAEAPDGFHPRYSAVSRTYRYYFSAPGDAAAMHEAAQEFLGRHDFSAFARAGDRNPERRILASRVFIDGEFAVFEVTGESFLWNMVRCMATMLGRVGRGEAEAGEIARLLTGPVERRVAAAPPEGLILWDIDYGIPFTPLPIDAGSSRHLGDRHRYHVLMAKISAHLAQDHRQPDTPGI.

The Nucleophile role is filled by Asp55. Position 110 (Tyr110) interacts with substrate.

This sequence belongs to the tRNA pseudouridine synthase TruA family.

The enzyme catalyses uridine(38/39/40) in tRNA = pseudouridine(38/39/40) in tRNA. Functionally, formation of pseudouridine at positions 38, 39 and 40 in the anticodon stem and loop of transfer RNAs. The sequence is that of tRNA pseudouridine synthase A from Methanoculleus marisnigri (strain ATCC 35101 / DSM 1498 / JR1).